Consider the following 615-residue polypeptide: DNA mismatch repair protein MutL (615 aa).

The interval 363–397 (FAEPAVREPVAPRYTPAPASGSRPAAPWPNAQPGY) is disordered. Positions 378-391 (PAPASGSRPAAPWP) are enriched in low complexity.

The protein belongs to the DNA mismatch repair MutL/HexB family.

This protein is involved in the repair of mismatches in DNA. It is required for dam-dependent methyl-directed DNA mismatch repair. May act as a 'molecular matchmaker', a protein that promotes the formation of a stable complex between two or more DNA-binding proteins in an ATP-dependent manner without itself being part of a final effector complex. The polypeptide is DNA mismatch repair protein MutL (Escherichia coli O157:H7).